A 170-amino-acid chain; its full sequence is Lipocalin Cav p 2.0101 (170 aa).

A signal peptide spans 1 to 16 (MMQILLLALAVSLACA). 2 disulfide bridges follow: Cys-56–Cys-60 and Cys-75–Cys-168.

This sequence belongs to the calycin superfamily. Lipocalin family. Post-translationally, not N-linked glycosylated. Expressed in harderian gland (at protein level). Expressed in hair (at protein level). Expressed in submaxillary gland and harderian gland.

It localises to the secreted. This Cavia porcellus (Guinea pig) protein is Lipocalin Cav p 2.0101 (Lcncavp2).